A 1066-amino-acid chain; its full sequence is Beta-galactosidase (1066 aa).

Substrate is bound by residues asparagine 110 and aspartate 209. A Na(+)-binding site is contributed by aspartate 209. Positions 432, 434, and 477 each coordinate Mg(2+). Residues glutamate 477 and 553–556 contribute to the substrate site; that span reads EYAH. Glutamate 477 serves as the catalytic Proton donor. The Nucleophile role is filled by glutamate 553. Asparagine 613 is a Mg(2+) binding site. Na(+)-binding residues include phenylalanine 617 and asparagine 620. 2 residues coordinate substrate: asparagine 620 and tryptophan 1041.

The protein belongs to the glycosyl hydrolase 2 family. In terms of assembly, homotetramer. Mg(2+) is required as a cofactor. Na(+) serves as cofactor.

The catalysed reaction is Hydrolysis of terminal non-reducing beta-D-galactose residues in beta-D-galactosides.. In Yersinia pseudotuberculosis serotype O:1b (strain IP 31758), this protein is Beta-galactosidase.